The chain runs to 189 residues: Flavin prenyltransferase UbiX (189 aa).

FMN contacts are provided by residues 10 to 12, Ser37, 88 to 91, and Arg123; these read GAS and SIKT. Dimethylallyl phosphate is bound by residues Tyr153 and Arg169.

Belongs to the UbiX/PAD1 family.

The enzyme catalyses dimethylallyl phosphate + FMNH2 = prenylated FMNH2 + phosphate. It functions in the pathway cofactor biosynthesis; ubiquinone biosynthesis. Flavin prenyltransferase that catalyzes the synthesis of the prenylated FMN cofactor (prenyl-FMN) for 4-hydroxy-3-polyprenylbenzoic acid decarboxylase UbiD. The prenyltransferase is metal-independent and links a dimethylallyl moiety from dimethylallyl monophosphate (DMAP) to the flavin N5 and C6 atoms of FMN. This is Flavin prenyltransferase UbiX from Escherichia coli O157:H7.